Consider the following 534-residue polypeptide: Prolyl 4-hydroxylase subunit alpha-1 (534 aa).

A signal peptide spans 1 to 17 (MIWYILIIGILLPQSLA). A glycan (N-linked (GlcNAc...) asparagine) is linked at N113. The stretch at 205–238 (VSVLDYLSYAVYQQGDLDKALLLTKKLLELDPEH) is one TPR repeat. N259 is a glycosylation site (N-linked (GlcNAc...) asparagine). A Fe2OG dioxygenase domain is found at 411–519 (TAEELQVANY…KWVSNKWLHE (109 aa)). H429, D431, and H500 together coordinate Fe cation. Residue K510 coordinates 2-oxoglutarate.

It belongs to the P4HA family. As to quaternary structure, heterotetramer of two alpha-1 chains and two beta chains (P4HB)(the beta chain is the multi-functional PDI), where P4HB plays the role of a structural subunit; this tetramer catalyzes the formation of 4-hydroxyproline in collagen. Fe(2+) is required as a cofactor. The cofactor is L-ascorbate. Expressed in the heart, liver, skeletal muscle, kidney, placenta, lung and pancreas.

The protein localises to the endoplasmic reticulum lumen. It carries out the reaction L-prolyl-[collagen] + 2-oxoglutarate + O2 = trans-4-hydroxy-L-prolyl-[collagen] + succinate + CO2. Inhibited by poly(L-proline). In terms of biological role, catalyzes the post-translational formation of 4-hydroxyproline in -Xaa-Pro-Gly- sequences in collagens and other proteins. The sequence is that of Prolyl 4-hydroxylase subunit alpha-1 (P4HA1) from Homo sapiens (Human).